The following is a 254-amino-acid chain: Coenzyme F420:L-glutamate ligase (254 aa).

GTP is bound by residues 11-14 (IPLI), 40-41 (ST), and lysine 45. Aspartate 109 contributes to the a divalent metal cation binding site. Asparagine 112 is a GTP binding site. Residues aspartate 150, threonine 151, and glutamate 208 each coordinate a divalent metal cation. 206–213 (MGEGAGGI) contributes to the GTP binding site.

It belongs to the CofE family. In terms of assembly, homodimer. Requires Mg(2+) as cofactor. It depends on Mn(2+) as a cofactor. The cofactor is K(+).

The catalysed reaction is oxidized coenzyme F420-0 + GTP + L-glutamate = oxidized coenzyme F420-1 + GDP + phosphate + H(+). The enzyme catalyses oxidized coenzyme F420-1 + GTP + L-glutamate = oxidized coenzyme F420-2 + GDP + phosphate + H(+). The protein operates within cofactor biosynthesis; coenzyme F420 biosynthesis. Catalyzes the GTP-dependent successive addition of two or more gamma-linked L-glutamates to the L-lactyl phosphodiester of 7,8-didemethyl-8-hydroxy-5-deazariboflavin (F420-0) to form coenzyme F420-0-glutamyl-glutamate (F420-2) or polyglutamated F420 derivatives. This is Coenzyme F420:L-glutamate ligase from Methanosarcina mazei (strain ATCC BAA-159 / DSM 3647 / Goe1 / Go1 / JCM 11833 / OCM 88) (Methanosarcina frisia).